The chain runs to 185 residues: Homeobox expressed in ES cells 1 (185 aa).

The disordered stretch occupies residues 32–69; sequence KKDCTTSVRPHRPWTDTCGDSEKGGNPPLHAPDLPSET. The segment at residues 108–167 is a DNA-binding region (homeobox); that stretch reads GRRPRTAFTQNQVEVLENVFRVNCYPGIDIREDLAQKLNLEEDRIQIWFQNRRAKMKRSR.

The protein belongs to the ANF homeobox family. Can form heterodimers with PROP1 in binding to DNA Interacts with TLE1. As to expression, high levels found in the embryonic liver, lower level expression seen in the viscera, amnion and yolk sac.

It localises to the nucleus. In terms of biological role, required for the normal development of the forebrain, eyes and other anterior structures such as the olfactory placodes and pituitary gland. Possible transcriptional repressor. Binds to the palindromic PIII sequence, 5'-AGCTTGAGTCTAATTGAATTAACTGTAC-3'. HESX1 and PROP1 bind as heterodimers on this palindromic site, and, in vitro, HESX1 can antagonize PROP1 activation. The chain is Homeobox expressed in ES cells 1 (Hesx1) from Mus musculus (Mouse).